The sequence spans 514 residues: Cytidine and dCMP deaminase domain-containing protein 1 (514 aa).

2 stretches are compositionally biased toward polar residues: residues Met1–Glu11 and Ser18–Thr27. Disordered stretches follow at residues Met1 to Thr27 and Arg55 to Arg83. The span at Gln59–Arg83 shows a compositional bias: basic and acidic residues. Residues Gly70 to Glu168 form the CMP/dCMP-type deaminase 1 domain. The Zn(2+) site is built by His109, Cys134, and Cys137. The Nuclear export signal signature appears at Asn271–Leu283. The CMP/dCMP-type deaminase 2 domain maps to Glu317–Glu482. His398 lines the Zn(2+) pocket. The active-site Proton donor is the Glu400. Cys426 and Cys429 together coordinate Zn(2+). The segment at Gly480 to His514 is disordered. Residues Glu485–His514 are compositionally biased toward basic and acidic residues. A Bipartite nuclear localization signal motif is present at residues Arg488–Arg510.

Belongs to the cytidine and deoxycytidylate deaminase family. Requires Zn(2+) as cofactor. As to expression, widely expressed. Expressed at high levels in the testis.

It is found in the cytoplasm. Its subcellular location is the nucleus. The catalysed reaction is 2'-deoxycytidine + H2O + H(+) = 2'-deoxyuridine + NH4(+). The enzyme catalyses cytidine + H2O + H(+) = uridine + NH4(+). Catalyzes the deamination of cytidine and deoxycytidine into uridine and deoxyuridine, respectively. May play an important role in testicular development and spermatogenesis. This Homo sapiens (Human) protein is Cytidine and dCMP deaminase domain-containing protein 1 (CDADC1).